Reading from the N-terminus, the 363-residue chain is 3-dehydroquinate synthase (363 aa).

Residues 134-135 (TT), Lys147, and Lys156 each bind NAD(+). Glu189, His254, and His271 together coordinate Zn(2+).

It belongs to the sugar phosphate cyclases superfamily. Dehydroquinate synthase family. It depends on Co(2+) as a cofactor. Zn(2+) is required as a cofactor. NAD(+) serves as cofactor.

Its subcellular location is the cytoplasm. The catalysed reaction is 7-phospho-2-dehydro-3-deoxy-D-arabino-heptonate = 3-dehydroquinate + phosphate. It participates in metabolic intermediate biosynthesis; chorismate biosynthesis; chorismate from D-erythrose 4-phosphate and phosphoenolpyruvate: step 2/7. Functionally, catalyzes the conversion of 3-deoxy-D-arabino-heptulosonate 7-phosphate (DAHP) to dehydroquinate (DHQ). This Prochlorococcus marinus (strain AS9601) protein is 3-dehydroquinate synthase.